A 230-amino-acid chain; its full sequence is Iron-dependent repressor IdeR (230 aa).

The HTH dtxR-type domain maps to 4 to 65 (LVDTTEMYLR…VAGNRHLELT (62 aa)).

Belongs to the DtxR/MntR family. As to quaternary structure, homodimer.

The protein resides in the cytoplasm. Metal-dependent DNA-binding protein that controls transcription of many genes involved in iron metabolism. The chain is Iron-dependent repressor IdeR (ideR) from Mycobacterium leprae (strain TN).